The chain runs to 254 residues: 2-dehydro-3-deoxy-D-gluconate 5-dehydrogenase (254 aa).

Tyr159 (proton acceptor) is an active-site residue.

The protein belongs to the short-chain dehydrogenases/reductases (SDR) family.

It carries out the reaction 2-dehydro-3-deoxy-D-gluconate + NAD(+) = 3-deoxy-D-glycero-2,5-hexodiulosonate + NADH + H(+). Involved in the degradation of 3,6-anhydro-L-galactose, which is the major monomeric sugar of red macroalgae. Catalyzes the fourth step of the pathway, the reduction of 3-deoxy-D-glycero-2,5-hexodiulosonate (L-DDGal) to 2-dehydro-3-deoxy-D-gluconate (KDG). This Pseudoalteromonas atlantica (strain T6c / ATCC BAA-1087) protein is 2-dehydro-3-deoxy-D-gluconate 5-dehydrogenase.